We begin with the raw amino-acid sequence, 104 residues long: Small ribosomal subunit protein bS16 (104 aa).

The protein belongs to the bacterial ribosomal protein bS16 family.

The sequence is that of Small ribosomal subunit protein bS16 from Gemmatimonas aurantiaca (strain DSM 14586 / JCM 11422 / NBRC 100505 / T-27).